The sequence spans 1430 residues: Nephrocystin-4 (1430 aa).

The tract at residues M824 to E1430 is sufficient for basal bodies localization. The interval N828–R857 is disordered.

Belongs to the NPHP4 family.

It localises to the cytoplasm. The protein localises to the cytoskeleton. Its subcellular location is the cilium basal body. In terms of biological role, involved in the organization of apical junctions. Required for building functional cilia. Involved in the organization of the subapical actin network in multiciliated epithelial cells. Seems to recruit int to basal bodies of motile cilia which subsequently interacts with actin-modifying proteins such as daam1. May down-regulate the canonical Wnt pathway and promote the Wnt-PCP pathway. Acts as a negative regulator of the hippo pathway. The polypeptide is Nephrocystin-4 (nphp4) (Xenopus laevis (African clawed frog)).